A 214-amino-acid polypeptide reads, in one-letter code: uncharacterized protein (214 aa).

7 consecutive transmembrane segments (helical) span residues 4–23 (VSIVEIFLIISLPLLFFSSF), 35–57 (SFVHGAVLAVPLLLLRSFFLGYY), 67–89 (QWMRFFLFDYVFPLFCLPFFLFT), 96–118 (VSLVSGVSALFGAYTSFFFVHVY), 128–150 (ARVMTLVLYMTNLLQLHAHVSFS), 155–177 (LPLLGLIAALCIFLLMGAFSATV), and 187–209 (TVVYTSMLAGAGGVALLTHFFAV).

The protein resides in the cell membrane. This is an uncharacterized protein from Treponema pallidum (strain Nichols).